The following is a 607-amino-acid chain: Elongation factor 4 (607 aa).

Residues 11-193 (EKIRNFSIIA…QIVEKVPAPQ (183 aa)) enclose the tr-type G domain. Residues 23 to 28 (DHGKST) and 140 to 143 (NKID) each bind GTP.

The protein belongs to the TRAFAC class translation factor GTPase superfamily. Classic translation factor GTPase family. LepA subfamily.

It localises to the cell membrane. It carries out the reaction GTP + H2O = GDP + phosphate + H(+). In terms of biological role, required for accurate and efficient protein synthesis under certain stress conditions. May act as a fidelity factor of the translation reaction, by catalyzing a one-codon backward translocation of tRNAs on improperly translocated ribosomes. Back-translocation proceeds from a post-translocation (POST) complex to a pre-translocation (PRE) complex, thus giving elongation factor G a second chance to translocate the tRNAs correctly. Binds to ribosomes in a GTP-dependent manner. The chain is Elongation factor 4 from Lactococcus lactis subsp. lactis (strain IL1403) (Streptococcus lactis).